A 250-amino-acid polypeptide reads, in one-letter code: 3-deoxy-manno-octulosonate cytidylyltransferase (250 aa).

Belongs to the KdsB family.

Its subcellular location is the cytoplasm. The enzyme catalyses 3-deoxy-alpha-D-manno-oct-2-ulosonate + CTP = CMP-3-deoxy-beta-D-manno-octulosonate + diphosphate. It participates in nucleotide-sugar biosynthesis; CMP-3-deoxy-D-manno-octulosonate biosynthesis; CMP-3-deoxy-D-manno-octulosonate from 3-deoxy-D-manno-octulosonate and CTP: step 1/1. It functions in the pathway bacterial outer membrane biogenesis; lipopolysaccharide biosynthesis. Functionally, activates KDO (a required 8-carbon sugar) for incorporation into bacterial lipopolysaccharide in Gram-negative bacteria. This chain is 3-deoxy-manno-octulosonate cytidylyltransferase, found in Cytophaga hutchinsonii (strain ATCC 33406 / DSM 1761 / CIP 103989 / NBRC 15051 / NCIMB 9469 / D465).